The following is a 96-amino-acid chain: Putative septation protein SpoVG (96 aa).

The protein belongs to the SpoVG family.

Functionally, could be involved in septation. This chain is Putative septation protein SpoVG, found in Clostridium kluyveri (strain ATCC 8527 / DSM 555 / NBRC 12016 / NCIMB 10680 / K1).